The following is a 442-amino-acid chain: F-box/kelch-repeat protein OR23 (442 aa).

Positions 37-84 (TLIPGLSNDVGRLILSFVPYPHISRIKSTCKSWYAFLSSKTLISLRHS) constitute an F-box domain. Kelch repeat units lie at residues 93 to 139 (LSHL…NFVA), 145 to 200 (YVYV…AMPG), 204 to 257 (RIIV…LVEN), 269 to 328 (EFWV…KIVA), 330 to 377 (DCGK…ALNG), and 390 to 437 (LMDT…TTVM).

This chain is F-box/kelch-repeat protein OR23 (OR23), found in Arabidopsis thaliana (Mouse-ear cress).